Here is a 308-residue protein sequence, read N- to C-terminus: Inosose dehydratase (308 aa).

This sequence belongs to the IolE/MocC family. Requires glutathione as cofactor. Co(2+) serves as cofactor. Mn(2+) is required as a cofactor.

The catalysed reaction is scyllo-inosose = 3D-3,5/4-trihydroxycyclohexane-1,2-dione + H2O. Its pathway is polyol metabolism; myo-inositol degradation into acetyl-CoA; acetyl-CoA from myo-inositol: step 2/7. Functionally, catalyzes the dehydration of inosose (2-keto-myo-inositol, 2KMI or 2,4,6/3,5-pentahydroxycyclohexanone) to 3D-(3,5/4)-trihydroxycyclohexane-1,2-dione (D-2,3-diketo-4-deoxy-epi-inositol). The protein is Inosose dehydratase of Geobacillus kaustophilus (strain HTA426).